We begin with the raw amino-acid sequence, 234 residues long: UPF0173 metal-dependent hydrolase R01310 (234 aa).

Belongs to the UPF0173 family.

This chain is UPF0173 metal-dependent hydrolase R01310, found in Rhizobium meliloti (strain 1021) (Ensifer meliloti).